Consider the following 484-residue polypeptide: Probable cytosol aminopeptidase (484 aa).

Mn(2+) contacts are provided by Lys256 and Asp261. Residue Lys268 is part of the active site. 3 residues coordinate Mn(2+): Asp279, Asp338, and Glu340. Residue Arg342 is part of the active site.

It belongs to the peptidase M17 family. Mn(2+) is required as a cofactor.

The protein resides in the cytoplasm. The enzyme catalyses Release of an N-terminal amino acid, Xaa-|-Yaa-, in which Xaa is preferably Leu, but may be other amino acids including Pro although not Arg or Lys, and Yaa may be Pro. Amino acid amides and methyl esters are also readily hydrolyzed, but rates on arylamides are exceedingly low.. The catalysed reaction is Release of an N-terminal amino acid, preferentially leucine, but not glutamic or aspartic acids.. Presumably involved in the processing and regular turnover of intracellular proteins. Catalyzes the removal of unsubstituted N-terminal amino acids from various peptides. This chain is Probable cytosol aminopeptidase, found in Actinobacillus succinogenes (strain ATCC 55618 / DSM 22257 / CCUG 43843 / 130Z).